The chain runs to 310 residues: Acetyl-coenzyme A carboxylase carboxyl transferase subunit alpha (310 aa).

A CoA carboxyltransferase C-terminal domain is found at 36–286; it reads NLEKEITKTY…GEYILKQLDE (251 aa).

The protein belongs to the AccA family. As to quaternary structure, acetyl-CoA carboxylase is a heterohexamer composed of biotin carboxyl carrier protein (AccB), biotin carboxylase (AccC) and two subunits each of ACCase subunit alpha (AccA) and ACCase subunit beta (AccD).

It is found in the cytoplasm. The catalysed reaction is N(6)-carboxybiotinyl-L-lysyl-[protein] + acetyl-CoA = N(6)-biotinyl-L-lysyl-[protein] + malonyl-CoA. Its pathway is lipid metabolism; malonyl-CoA biosynthesis; malonyl-CoA from acetyl-CoA: step 1/1. In terms of biological role, component of the acetyl coenzyme A carboxylase (ACC) complex. First, biotin carboxylase catalyzes the carboxylation of biotin on its carrier protein (BCCP) and then the CO(2) group is transferred by the carboxyltransferase to acetyl-CoA to form malonyl-CoA. This Campylobacter fetus subsp. fetus (strain 82-40) protein is Acetyl-coenzyme A carboxylase carboxyl transferase subunit alpha.